The chain runs to 91 residues: Acyl-CoA-binding domain-containing protein 1 (91 aa).

One can recognise an ACB domain in the interval 3–88 (LQEDFEQYAE…VKQLLEEAAA (86 aa)). Residues K15, 30–34 (YGLYK), K56, and Y75 contribute to the an acyl-CoA site.

It belongs to the ACBP family. Highly expressed in leaves. Expressed at low levels in roots and seeds.

It is found in the cytoplasm. The protein localises to the cytosol. Its function is as follows. Binds medium- and long-chain acyl-CoA esters with high affinity. Can interact in vitro with palmitoyl-CoA, oleoyl-CoA, linoleoyl-CoA and linolenoyl-CoA. Binds phosphatidic acid (PA) and phosphatidylcholine (PC) in vitro. May play a role in the biosynthesis of phospholipids. This chain is Acyl-CoA-binding domain-containing protein 1, found in Oryza sativa subsp. japonica (Rice).